The sequence spans 241 residues: 2-C-methyl-D-erythritol 4-phosphate cytidylyltransferase (241 aa).

Belongs to the IspD/TarI cytidylyltransferase family. IspD subfamily. In terms of assembly, homodimer.

It carries out the reaction 2-C-methyl-D-erythritol 4-phosphate + CTP + H(+) = 4-CDP-2-C-methyl-D-erythritol + diphosphate. It participates in isoprenoid biosynthesis; isopentenyl diphosphate biosynthesis via DXP pathway; isopentenyl diphosphate from 1-deoxy-D-xylulose 5-phosphate: step 2/6. Catalyzes the formation of 4-diphosphocytidyl-2-C-methyl-D-erythritol from CTP and 2-C-methyl-D-erythritol 4-phosphate (MEP). This is 2-C-methyl-D-erythritol 4-phosphate cytidylyltransferase from Yersinia pseudotuberculosis serotype I (strain IP32953).